Here is a 783-residue protein sequence, read N- to C-terminus: BMP/retinoic acid-inducible neural-specific protein 2 (783 aa).

The signal sequence occupies residues 1–33 (MRWQCGTRFRGLRPVVAPWTALLALGLPGWVLA). Residues 85-281 (RYRIYREFAR…FVAAALSYIT (197 aa)) form the MACPF domain. N-linked (GlcNAc...) asparagine glycans are attached at residues N185, N354, N473, N579, N626, and N658.

This sequence belongs to the BRINP family.

The protein resides in the secreted. Inhibits neuronal cell proliferation by negative regulation of the cell cycle transition. The chain is BMP/retinoic acid-inducible neural-specific protein 2 (BRINP2) from Pongo abelii (Sumatran orangutan).